The primary structure comprises 357 residues: DNA polymerase IV (357 aa).

In terms of domain architecture, UmuC spans 4 to 185 (IIHVDMDCYF…LSLRQIPGVG (182 aa)). Residues aspartate 8 and aspartate 103 each coordinate Mg(2+). Glutamate 104 is an active-site residue.

This sequence belongs to the DNA polymerase type-Y family. Monomer. The cofactor is Mg(2+).

Its subcellular location is the cytoplasm. The enzyme catalyses DNA(n) + a 2'-deoxyribonucleoside 5'-triphosphate = DNA(n+1) + diphosphate. In terms of biological role, poorly processive, error-prone DNA polymerase involved in untargeted mutagenesis. Copies undamaged DNA at stalled replication forks, which arise in vivo from mismatched or misaligned primer ends. These misaligned primers can be extended by PolIV. Exhibits no 3'-5' exonuclease (proofreading) activity. May be involved in translesional synthesis, in conjunction with the beta clamp from PolIII. In Shewanella oneidensis (strain ATCC 700550 / JCM 31522 / CIP 106686 / LMG 19005 / NCIMB 14063 / MR-1), this protein is DNA polymerase IV.